The chain runs to 828 residues: USP6 N-terminal-like protein (828 aa).

N-acetylmethionine is present on methionine 1. The 193-residue stretch at glycine 100–glycine 292 folds into the Rab-GAP TBC domain. Residues aspartate 355–lysine 367 are compositionally biased toward basic and acidic residues. Residues aspartate 355–leucine 722 are disordered. 3 positions are modified to phosphoserine: serine 391, serine 396, and serine 400. Residues lysine 434–arginine 451 are compositionally biased toward basic and acidic residues. A compositionally biased stretch (low complexity) spans asparagine 465 to asparagine 478. Composition is skewed to basic and acidic residues over residues arginine 498 to glycine 508 and lysine 535 to arginine 544. 2 positions are modified to phosphoserine: serine 546 and serine 549. The residue at position 582 (tyrosine 582) is a Phosphotyrosine. The residue at position 585 (serine 585) is a Phosphoserine. Positions proline 592–phenylalanine 603 are enriched in polar residues. 5 positions are modified to phosphoserine: serine 642, serine 655, serine 659, serine 676, and serine 680. Composition is skewed to polar residues over residues threonine 648–proline 666 and serine 673–lysine 683. Over residues serine 686–arginine 697 the composition is skewed to low complexity. Position 716 is a phosphoserine (serine 716). Tyrosine 729 carries the phosphotyrosine modification. A disordered region spans residues lysine 789 to arginine 817.

As to quaternary structure, interacts with EPS8. As to expression, widely expressed.

The protein localises to the golgi apparatus. Its subcellular location is the cytoplasmic vesicle. Functionally, acts as a GTPase-activating protein for RAB5A and RAB43. Involved in receptor trafficking. In complex with EPS8 inhibits internalization of EGFR. Involved in retrograde transport from the endocytic pathway to the Golgi apparatus. Involved in the transport of Shiga toxin from early and recycling endosomes to the trans-Golgi network. Required for structural integrity of the Golgi complex. The chain is USP6 N-terminal-like protein (USP6NL) from Homo sapiens (Human).